The sequence spans 416 residues: Gamma-glutamyl phosphate reductase (416 aa).

This sequence belongs to the gamma-glutamyl phosphate reductase family.

The protein localises to the cytoplasm. It catalyses the reaction L-glutamate 5-semialdehyde + phosphate + NADP(+) = L-glutamyl 5-phosphate + NADPH + H(+). It participates in amino-acid biosynthesis; L-proline biosynthesis; L-glutamate 5-semialdehyde from L-glutamate: step 2/2. In terms of biological role, catalyzes the NADPH-dependent reduction of L-glutamate 5-phosphate into L-glutamate 5-semialdehyde and phosphate. The product spontaneously undergoes cyclization to form 1-pyrroline-5-carboxylate. This chain is Gamma-glutamyl phosphate reductase, found in Salmonella paratyphi C (strain RKS4594).